The sequence spans 114 residues: Beta-microseminoprotein (114 aa).

The signal sequence occupies residues 1–20 (MNVLLGGFVIFATFVTLCNA). 5 cysteine pairs are disulfide-bonded: cysteine 22-cysteine 70, cysteine 38-cysteine 62, cysteine 57-cysteine 93, cysteine 60-cysteine 69, and cysteine 84-cysteine 107.

This sequence belongs to the beta-microseminoprotein family. As to quaternary structure, homodimer; Interacts with PI16.

It is found in the secreted. In Macaca mulatta (Rhesus macaque), this protein is Beta-microseminoprotein (MSMB).